The sequence spans 305 residues: Nucleotide-binding protein Saro_2904 (305 aa).

15–22 (GLLGAGKT) contributes to the ATP binding site. 68-71 (DTRT) contributes to the GTP binding site.

This sequence belongs to the RapZ-like family.

Functionally, displays ATPase and GTPase activities. The chain is Nucleotide-binding protein Saro_2904 from Novosphingobium aromaticivorans (strain ATCC 700278 / DSM 12444 / CCUG 56034 / CIP 105152 / NBRC 16084 / F199).